Reading from the N-terminus, the 249-residue chain is Triosephosphate isomerase (249 aa).

9–11 (NWK) contributes to the substrate binding site. H94 (electrophile) is an active-site residue. E166 (proton acceptor) is an active-site residue. Substrate contacts are provided by residues G172 and 232–233 (GG).

This sequence belongs to the triosephosphate isomerase family. As to quaternary structure, homodimer.

The protein resides in the cytoplasm. It carries out the reaction D-glyceraldehyde 3-phosphate = dihydroxyacetone phosphate. It functions in the pathway carbohydrate biosynthesis; gluconeogenesis. It participates in carbohydrate degradation; glycolysis; D-glyceraldehyde 3-phosphate from glycerone phosphate: step 1/1. Involved in the gluconeogenesis. Catalyzes stereospecifically the conversion of dihydroxyacetone phosphate (DHAP) to D-glyceraldehyde-3-phosphate (G3P). The sequence is that of Triosephosphate isomerase from Xylella fastidiosa (strain M12).